Consider the following 505-residue polypeptide: Beta-glucosidase 3 (505 aa).

The signal sequence occupies residues 1-22 (MAAAAAFFCALLFISVQHGVLG). Residues Q43 and H143 each coordinate a beta-D-glucoside. The active-site Proton donor is the E189. C208 and C217 are oxidised to a cystine. N221 carries N-linked (GlcNAc...) asparagine glycosylation. Y333 and E405 together coordinate a beta-D-glucoside. The Nucleophile role is filled by E405. N-linked (GlcNAc...) asparagine glycosylation is found at N415 and N436. Positions 450 and 466 each coordinate a beta-D-glucoside.

It belongs to the glycosyl hydrolase 1 family.

The enzyme catalyses Hydrolysis of terminal, non-reducing beta-D-glucosyl residues with release of beta-D-glucose.. This is Beta-glucosidase 3 (BGLU3) from Oryza sativa subsp. japonica (Rice).